Reading from the N-terminus, the 388-residue chain is Succinate--CoA ligase [ADP-forming] subunit beta (388 aa).

Residues 9 to 244 (KALFAEYGLP…PSQDDAREAH (236 aa)) enclose the ATP-grasp domain. Residues K46, 53–55 (GRG), E99, T102, and E107 each bind ATP. N199 and D213 together coordinate Mg(2+). Substrate contacts are provided by residues N264 and 321–323 (GIV).

This sequence belongs to the succinate/malate CoA ligase beta subunit family. As to quaternary structure, heterotetramer of two alpha and two beta subunits. It depends on Mg(2+) as a cofactor.

It catalyses the reaction succinate + ATP + CoA = succinyl-CoA + ADP + phosphate. The catalysed reaction is GTP + succinate + CoA = succinyl-CoA + GDP + phosphate. The protein operates within carbohydrate metabolism; tricarboxylic acid cycle; succinate from succinyl-CoA (ligase route): step 1/1. Succinyl-CoA synthetase functions in the citric acid cycle (TCA), coupling the hydrolysis of succinyl-CoA to the synthesis of either ATP or GTP and thus represents the only step of substrate-level phosphorylation in the TCA. The beta subunit provides nucleotide specificity of the enzyme and binds the substrate succinate, while the binding sites for coenzyme A and phosphate are found in the alpha subunit. This chain is Succinate--CoA ligase [ADP-forming] subunit beta, found in Shewanella sediminis (strain HAW-EB3).